Consider the following 144-residue polypeptide: 3-dehydroquinate dehydratase (144 aa).

Residue Y24 is the Proton acceptor of the active site. The substrate site is built by N73, H79, and D86. H99 acts as the Proton donor in catalysis. Substrate-binding positions include 100 to 101 and R110; that span reads LS.

The protein belongs to the type-II 3-dehydroquinase family. In terms of assembly, homododecamer.

It catalyses the reaction 3-dehydroquinate = 3-dehydroshikimate + H2O. Its pathway is metabolic intermediate biosynthesis; chorismate biosynthesis; chorismate from D-erythrose 4-phosphate and phosphoenolpyruvate: step 3/7. Catalyzes a trans-dehydration via an enolate intermediate. This Shewanella putrefaciens (strain CN-32 / ATCC BAA-453) protein is 3-dehydroquinate dehydratase.